The following is a 391-amino-acid chain: Ectodysplasin-A (391 aa).

At 1 to 41 (MGYPEVERRELLPAAAPRERGSQGCGCGGAPARAGEGNSCL) the chain is on the cytoplasmic side. A helical; Signal-anchor for type II membrane protein membrane pass occupies residues 42–62 (LFLGFFGLSLALHLLTLCCYL). The Extracellular segment spans residues 63-391 (ELRSELRRER…AIRLGEAPAS (329 aa)). Disordered regions lie at residues 73-127 (GAES…HSDS) and 146-245 (YSEE…GTRE). The span at 86 to 101 (TSGTLSSLGGLDPDSP) shows a compositional bias: low complexity. A compositionally biased stretch (polar residues) spans 102-113 (ITSHLGQPSPKQ). The Collagen-like domain maps to 180–229 (GPPGPNGPPGPPGPPGPQGPPGIPGIPGIPGTTVMGPPGPPGPPGPQGPP). 2 stretches are compositionally biased toward pro residues: residues 181 to 203 (PPGP…PGIP) and 216 to 228 (PPGP…PQGP). The THD domain maps to 249–385 (AVVHLQGQGS…HTTFFGAIRL (137 aa)). A glycan (N-linked (GlcNAc...) asparagine) is linked at asparagine 313. Cysteine 332 and cysteine 346 are oxidised to a cystine. A glycan (N-linked (GlcNAc...) asparagine) is linked at asparagine 372.

The protein belongs to the tumor necrosis factor family. Homotrimer. The homotrimers may then dimerize and form higher-order oligomers. N-glycosylated. Post-translationally, processing by furin produces a secreted form. As to expression, not abundant; expressed in specific cell types of ectodermal (but not mesodermal) origin of keratinocytes, hair follicles, sweat glands. Also in adult heart, liver, muscle, pancreas, prostate, fetal liver, uterus, small intestine and umbilical cord.

Its subcellular location is the cell membrane. It is found in the secreted. Functionally, cytokine which is involved in epithelial-mesenchymal signaling during morphogenesis of ectodermal organs. Functions as a ligand activating the DEATH-domain containing receptors EDAR and EDA2R. May also play a role in cell adhesion. In terms of biological role, binds only to the receptor EDAR, while isoform 3 binds exclusively to the receptor EDA2R. Its function is as follows. Binds only to the receptor EDA2R. The sequence is that of Ectodysplasin-A (EDA) from Homo sapiens (Human).